The following is an 84-amino-acid chain: Putative membrane protein insertion efficiency factor (84 aa).

This sequence belongs to the UPF0161 family.

The protein resides in the cell inner membrane. Functionally, could be involved in insertion of integral membrane proteins into the membrane. In Shewanella loihica (strain ATCC BAA-1088 / PV-4), this protein is Putative membrane protein insertion efficiency factor.